Reading from the N-terminus, the 399-residue chain is MAGCILLLRGFILTLILHQVELSVFLPAPKANNVLRRWRRGSSYFLEEIFQGNLEKECYEEVCNYEEAREVFENDVITDEFWRQYGGGSPCVSQPCLNNGTCEDHIRSYSCTCSPGYEGKTCAMAKNECHLERTDGCQHFCHPGQSSYMCSCAKGYKLGKDQKSCGPSDKCACGALTSEHIRMTKSSQSQPSFPWQVRLTNSEGEDFCAGVLLQEDFVLTTAKCSLLHSNISVKANVDQRIRIKSTHVHMRYDEESGENDVSLLQLEEPLQCPSSGLPVCVPERDFAEHVLIPGTEGLLSGWMLNGTHLATTPMLLSVTQADGEECGQTLNVTVTTRTSCEKGSVVMGPWVEGSVVTREHKGTWFLTGILGSPPPPGQSQMLLLTAVPRYSMWFKQIMK.

The N-terminal stretch at 1–22 (MAGCILLLRGFILTLILHQVEL) is a signal peptide. A propeptide spanning residues 23–40 (SVFLPAPKANNVLRRWRR) is cleaved from the precursor. A Gla domain is found at 41 to 86 (GSSYFLEEIFQGNLEKECYEEVCNYEEAREVFENDVITDEFWRQYG). 11 positions are modified to 4-carboxyglutamate: E47, E48, E55, E57, E60, E61, E66, E67, E70, E73, and E80. An intrachain disulfide couples C58 to C63. 2 EGF-like domains span residues 87-123 (GGSP…KTCA) and 125-166 (AKNE…KSCG). 7 disulfides stabilise this stretch: C91/C102, C96/C111, C113/C122, C129/C141, C137/C150, C152/C165, and C208/C224. An N-linked (GlcNAc...) asparagine glycan is attached at N99. The residue at position 104 (D104) is a (3R)-3-hydroxyaspartate. The Peptidase S1 domain occupies 172–399 (ACGALTSEHI…YSMWFKQIMK (228 aa)). N230, N305, and N331 each carry an N-linked (GlcNAc...) asparagine glycan. The cysteines at positions 326 and 340 are disulfide-linked.

The protein belongs to the peptidase S1 family. Post-translationally, the iron and 2-oxoglutarate dependent 3-hydroxylation of aspartate and asparagine is (R) stereospecific within EGF domains. Plasma.

It is found in the secreted. In terms of biological role, appears to assist hemostasis by binding thrombin and promoting its association with phospholipid vesicles. Inhibits activity of the coagulation protease factor Xa in the presence of SERPINA10, calcium and phospholipids. The sequence is that of Vitamin K-dependent protein Z (Proz) from Mus musculus (Mouse).